Reading from the N-terminus, the 58-residue chain is Small ribosomal subunit protein bS21 (58 aa).

Residues 25–58 (KAGTLQEARKREHYEKPSVKRKRKSEAARKRKKI) form a disordered region. Residues 31-42 (EARKREHYEKPS) are compositionally biased toward basic and acidic residues. Positions 43 to 58 (VKRKRKSEAARKRKKI) are enriched in basic residues.

This sequence belongs to the bacterial ribosomal protein bS21 family.

The sequence is that of Small ribosomal subunit protein bS21 from Streptococcus thermophilus (strain ATCC BAA-491 / LMD-9).